The primary structure comprises 270 residues: Shikimate dehydrogenase (NADP(+)) (270 aa).

Shikimate is bound by residues 15-17 and threonine 62; that span reads SKS. Lysine 66 acts as the Proton acceptor in catalysis. NADP(+) is bound at residue aspartate 78. Residues asparagine 87 and aspartate 103 each coordinate shikimate. Residues 128–132, 152–157, and leucine 213 each bind NADP(+); these read GAGGA and NRTVDR. Tyrosine 215 lines the shikimate pocket. NADP(+) is bound at residue glycine 237.

It belongs to the shikimate dehydrogenase family. As to quaternary structure, homodimer.

The enzyme catalyses shikimate + NADP(+) = 3-dehydroshikimate + NADPH + H(+). The protein operates within metabolic intermediate biosynthesis; chorismate biosynthesis; chorismate from D-erythrose 4-phosphate and phosphoenolpyruvate: step 4/7. Functionally, involved in the biosynthesis of the chorismate, which leads to the biosynthesis of aromatic amino acids. Catalyzes the reversible NADPH linked reduction of 3-dehydroshikimate (DHSA) to yield shikimate (SA). The polypeptide is Shikimate dehydrogenase (NADP(+)) (Halorhodospira halophila (strain DSM 244 / SL1) (Ectothiorhodospira halophila (strain DSM 244 / SL1))).